A 489-amino-acid chain; its full sequence is Cytochrome P450 monooxygenase orf5 (489 aa).

The chain crosses the membrane as a helical span at residues 13–35 (FVRLLAFHLIGLFVSITVYRLFF). N-linked (GlcNAc...) asparagine glycosylation is found at N37, N118, N171, and N345. C428 is a binding site for heme.

It belongs to the cytochrome P450 family. Heme is required as a cofactor.

Its subcellular location is the membrane. The protein operates within mycotoxin biosynthesis. Its function is as follows. Cytochrome P450 monooxygenase; part of the gene cluster that mediates the biosynthesis of brefeldin A (BFA), a protein transport inhibitor that shows antiviral, antifungal, and antitumor properties. The proposed biosynthesis of BFA involves formation of an acyclic polyketide chain that is differentially tailored throughout the backbone. The highly reducing polyketide synthase Bref-PKS is proposed to synthesize the precisely reduced octaketide precursor, which could then be directly offloaded by the thiohydrolase enzyme Bref-TH followed by a cytochrome P450 monooxygenase-mediated formation of the cyclopentane ring and macrocyclization to afford 7-deoxy BFA. Alternatively, the first ring annulation can also occur on the ACP-tethered intermediate before the thiohydrolase release and lactonization. The C7-hydroxylation by another cytochrome P450 monooxygenase is believed to be the final step in the process to obtain the final structure of BFA. In addition to the HRPKS Bref-PKS and the thiohydrolase Bref-TH, the brefeldin A biosynthesis cluster contains 4 cytochrome p450 monooxygenases (called orf3 to orf6), as well a the probable cluster-specific transcription regulator orf8. The polypeptide is Cytochrome P450 monooxygenase orf5 (Eupenicillium brefeldianum (Penicillium brefeldianum)).